Reading from the N-terminus, the 600-residue chain is Na(+)/dicarboxylate cotransporter 3 (600 aa).

The Cytoplasmic portion of the chain corresponds to 1-16 (MAALAALAKKVWSARR). Residues 17 to 37 (LLVLLLVPLALLPILFALPPK) form a helical membrane-spanning segment. Residues 38–55 (EGRCLYVILLMAVYWCTE) lie on the Extracellular side of the membrane. The helical transmembrane segment at 56 to 76 (ALPLSVTALLPIILFPFMGIL) threads the bilayer. At 77–82 (PSSKVC) the chain is on the cytoplasmic side. A helical membrane pass occupies residues 83-103 (PQYFLDTNFLFLSGLIMASAI). Topologically, residues 104–137 (EEWNLHRRIALKVLMLVGVQPARLILGMMVTTSF) are extracellular. The chain crosses the membrane as a helical span at residues 138–158 (LSMWLSNTASTAMMLPIASAI). Residues 159–229 (LKSLFGQREA…KEEEHRRNIW (71 aa)) lie on the Cytoplasmic side of the membrane. Residues 230 to 250 (KGFLISIPYSASIGGTATLTG) traverse the membrane as a helical segment. Residues 251-278 (TAPNLILLGQLKSFFPQCDVVNFGSWFI) lie on the Extracellular side of the membrane. The chain crosses the membrane as a helical span at residues 279 to 299 (FAFPLMLLFLLVGWLWISFLY). Residues 300–336 (GGMSWRSWRKKKSKIRADAEDQAKAVIQEEFQNLGPI) are Cytoplasmic-facing. Residues 337 to 357 (KFAEQAVFILFCTFAILLFSR) traverse the membrane as a helical segment. Residues 358–372 (DPKFIPGWASLFAPG) lie on the Extracellular side of the membrane. Residues 373-393 (FVSDAVTGVAIVTILFFFPSQ) form a helical membrane-spanning segment. Residues 394-422 (KPSLKWWFDFKAPNSETEPLLSWKKAQET) lie on the Cytoplasmic side of the membrane. The segment at residues 423 to 443 (VPWNIILLLGGGFAMAKGCEE) is an intramembrane region (helical). At 444–461 (SGLSAWIGGQLHPLEHVP) the chain is on the cytoplasmic side. A helical membrane pass occupies residues 462-482 (PLLAVLLITVVIAFFTEFASN). Topologically, residues 483 to 505 (TATIIIFLPVLAELAIRLHVHPL) are extracellular. The chain crosses the membrane as a helical span at residues 506-526 (YLMIPGTVGCSYAFMLPVSTP). Topologically, residues 527–546 (PNSIAFSTGHLLVKDMVRTG) are cytoplasmic. Residues 547–567 (LLMNLMGVLLLSLAMNTWAQT) form a helical membrane-spanning segment. At 568–600 (IFQLGTFPDWANTHAANATALPPALTNNTVQTF) the chain is on the extracellular side. Residues asparagine 584 and asparagine 594 are each glycosylated (N-linked (GlcNAc...) asparagine).

It belongs to the SLC13A/DASS transporter (TC 2.A.47) family. NADC subfamily. In terms of tissue distribution, highly expressed in kidney, and at much lower levels in brain.

It is found in the cell membrane. The catalysed reaction is succinate(out) + 3 Na(+)(out) = succinate(in) + 3 Na(+)(in). It catalyses the reaction 2-oxoglutarate(out) + 3 Na(+)(out) = 2-oxoglutarate(in) + 3 Na(+)(in). The enzyme catalyses N-acetyl-L-aspartate(out) + 3 Na(+)(out) = N-acetyl-L-aspartate(in) + 3 Na(+)(in). It carries out the reaction fumarate(out) + 3 Na(+)(out) = fumarate(in) + 3 Na(+)(in). The catalysed reaction is glutarate(out) + 3 Na(+)(out) = glutarate(in) + 3 Na(+)(in). It catalyses the reaction 2,2-dimethylsuccinate(out) + 3 Na(+)(out) = 2,2-dimethylsuccinate(in) + 3 Na(+)(in). The enzyme catalyses 2,3-dimethylsuccinate(out) + 3 Na(+)(out) = 2,3-dimethylsuccinate(in) + 3 Na(+)(in). It carries out the reaction malate(out) + 3 Na(+)(out) = malate(in) + 3 Na(+)(in). The catalysed reaction is itaconate(out) + 3 Na(+)(out) = itaconate(in) + 3 Na(+)(in). Its function is as follows. High-affinity sodium-dicarboxylate cotransporter that accepts a range of substrates with 4-6 carbon atoms, such as the citric acid cycle intermediates succinate and alpha-ketoglutarate (2-oxoglutarate), as well as other compounds including N-acetyl-L-aspartate. Transports the dicarboxylate into the cell with a probable stoichiometry of 3 Na(+) for 1 divalent dicarboxylate, rendering the process electrogenic. Can transport citrate in a Na(+)-dependent manner, recognizing the divalent form of citrate rather than the trivalent form which is normally found in blood. Imports itaconate in hepatocytes leading to activation of TFEB-dependent lysosomal biogenesis involved in antibacterial innate immune response. The chain is Na(+)/dicarboxylate cotransporter 3 (Slc13a3) from Mus musculus (Mouse).